The sequence spans 574 residues: MSADIVDIGHTGWMPSVQSLSILLVPGALVLVILYLCERQCNDLMGAPPPGPWGLPFLGYLPFLDARAPHKSLQKLAKRYGGIFELKMGRVPTVVLSDAALVRDFFRRDVMTGRAPLYLTHGIMGGFGIICAQEDIWRHARRETIDWLKALGMTRRPGELRARLERRIARGVDECVRLFDTEAKKSCASEVNPLPALHHSLGNIINDLVFGITYKRDDPDWLYLQRLQEEGVKLIGVSGVVNFLPWLRHLPANVRNIRFLLEGKAKTHAIYDRIVEACGQRLKEKQKVFKELQEQKRLQRQLEKEQLRQSKEADPSQEQSEADEDDEESDEEDTYEPECILEHFLAVRDTDSQLYCDDQLRHLLADLFGAGVDTSLATLRWFLLYLAREQRCQRRLHELLLPLGPSPTLEELEPLAYLRACISETMRIRSVVPLGIPHGCKENFVVGDYFIKGGSMIVCSEWAIHMDPVAFPEPEEFRPERFLTADGAYQAPPQFIPFSSGYRMCPGEEMARMILTLFTGRILRRFHLELPSGTEVDMAGESGITLTPTPHMLRFTKLPAVEMRHAPDGAVVQD.

Residues 303-314 (EKEQLRQSKEAD) are compositionally biased toward basic and acidic residues. Residues 303-333 (EKEQLRQSKEADPSQEQSEADEDDEESDEED) are disordered. The segment covering 320-333 (SEADEDDEESDEED) has biased composition (acidic residues). Position 505 (C505) interacts with heme.

This sequence belongs to the cytochrome P450 family. The cofactor is heme. First seen at the early (syncytial) blastoderm stage 4. During cellularization of the blastoderm (stage 5), stripes of expression appear and remain through to stage 10. Expression becomes undetectable during germ band retraction (stages 11-14). By stage 15, some expression resumes in the primordium of the ring gland, so that by stage 17 strong expression is seen, but only in the ring gland. This specific localization continues throughout the larval instars (at protein level). Expressed in the prothoracic gland cells of the larval ring gland (RG). Levels decline just after the molt to the third instar then increase later during the wandering stage. Low levels of expression are seen in the larval brain and fat body. In the adult, majority of expression is restricted to the ovaries, with low levels in the head and carcass of both sexes.

Its subcellular location is the endoplasmic reticulum membrane. It localises to the microsome membrane. The enzyme catalyses 2,22,25-trideoxyecdysone + 2 reduced [adrenodoxin] + O2 + 2 H(+) = 2,22-dideoxyecdysone + 2 oxidized [adrenodoxin] + H2O. The protein operates within steroid biosynthesis; ecdysteroid biosynthesis. In terms of biological role, involved in the metabolism of insect hormones; responsible for ecdysteroid C25-hydroxylase activity. May be involved in the breakdown of synthetic insecticides. The chain is Cytochrome P450 306a1 from Drosophila melanogaster (Fruit fly).